The sequence spans 122 residues: Ribosome-binding factor A (122 aa).

This sequence belongs to the RbfA family. In terms of assembly, monomer. Binds 30S ribosomal subunits, but not 50S ribosomal subunits or 70S ribosomes.

It localises to the cytoplasm. Functionally, one of several proteins that assist in the late maturation steps of the functional core of the 30S ribosomal subunit. Associates with free 30S ribosomal subunits (but not with 30S subunits that are part of 70S ribosomes or polysomes). Required for efficient processing of 16S rRNA. May interact with the 5'-terminal helix region of 16S rRNA. This is Ribosome-binding factor A from Polaromonas naphthalenivorans (strain CJ2).